Consider the following 111-residue polypeptide: WAP four-disulfide core domain protein 12 (111 aa).

The N-terminal stretch at 1–23 is a signal peptide; the sequence is MGSSSFLVLMVSLALVTLVVVEG. Residues 27–74 form the WAP domain; sequence GIEKAGVCPADNVRCFKSNPPQCHTDQDCLGERKCCYLHCGFKCVIPV. Intrachain disulfides connect C34–C62, C41–C66, C49–C61, and C55–C70. The segment at 80 to 111 is disordered; it reads GGNKDEDVSGPHPEPGWEAKSPGSSSTGCPQI. Residues 101–111 are compositionally biased toward polar residues; sequence PGSSSTGCPQI.

It localises to the secreted. Antibacterial protein. Putative acid-stable proteinase inhibitor. This chain is WAP four-disulfide core domain protein 12 (WFDC12), found in Colobus guereza (Mantled guereza).